We begin with the raw amino-acid sequence, 1013 residues long: Tolloid-like protein 1 (1013 aa).

An N-terminal signal peptide occupies residues 1-30 (MGLGTLSPRMLVWLVASGIVFYGELWVCAG). Positions 31–147 (LDYDYTFDGN…GQNEKNRVPR (117 aa)) are excised as a propeptide. A Peptidase M12A domain is found at 148–347 (AATSRTERIW…AQARKLYRCP (200 aa)). The N-linked (GlcNAc...) asparagine glycan is linked to N169. 4 cysteine pairs are disulfide-bonded: C190/C346, C210/C232, C212/C213, and C349/C375. H240 serves as a coordination point for Zn(2+). Residue E241 is part of the active site. Zn(2+)-binding residues include H244 and H250. CUB domains follow at residues 349 to 461 (CGET…YEAI) and 462 to 574 (CGGE…FFKE). N-linked (GlcNAc...) asparagine glycans are attached at residues N359 and N390. 15 disulfide bridges follow: C402–C424, C462–C488, C515–C537, C578–C590, C586–C599, C601–C614, C618–C644, C671–C693, C734–C745, C741–C754, C756–C769, C774–C800, C827–C849, C887–C917, and C944–C966. One can recognise an EGF-like 1; calcium-binding domain in the interval 574-615 (EEDECAKPDRGGCEQRCLNTLGSYQCACEPGYELGPDRRSCE). The CUB 3 domain maps to 618-730 (CGGLLTKLNG…KGFKAHFFSD (113 aa)). N626 is a glycosylation site (N-linked (GlcNAc...) asparagine). An EGF-like 2; calcium-binding domain is found at 730–770 (DKDECSKDNGGCQHECVNTMGSYMCQCRNGFVLHDNKHDCK). CUB domains follow at residues 774 to 886 (CEQK…HSTE) and 887 to 1003 (CGGR…YKSI).

Zn(2+) serves as cofactor.

It is found in the secreted. Functionally, protease which processes procollagen C-propeptides, such as chordin, pro-biglycan and pro-lysyl oxidase. Required for the embryonic development. Predominant protease, which in the development, influences dorsal-ventral patterning and skeletogenesis. The sequence is that of Tolloid-like protein 1 (TLL1) from Homo sapiens (Human).